The chain runs to 84 residues: MTTGLDAARKQEIKEIVCDILEIDEDEVTETSLFKEQHDADSLRAIEILAALERTQKVTIDQAELSRMVNLEGVYVVVSEAAQN.

The Carrier domain occupies 7-82 (AARKQEIKEI…GVYVVVSEAA (76 aa)). The residue at position 42 (serine 42) is an O-(pantetheine 4'-phosphoryl)serine.

Post-translationally, 4'-phosphopantetheine is transferred from CoA to a specific serine of the apo-ACP-like protein.

In terms of biological role, acyl carrier protein. This chain is Polyketide-8 synthase acyl carrier protein 1, found in Streptomyces avermitilis (strain ATCC 31267 / DSM 46492 / JCM 5070 / NBRC 14893 / NCIMB 12804 / NRRL 8165 / MA-4680).